Consider the following 824-residue polypeptide: Leucine--tRNA ligase (824 aa).

The 'HIGH' region motif lies at 42-52 (PYPSGKIHMGH). The short motif at 581–585 (KMSKS) is the 'KMSKS' region element. Residue Lys-584 coordinates ATP.

It belongs to the class-I aminoacyl-tRNA synthetase family.

The protein resides in the cytoplasm. The catalysed reaction is tRNA(Leu) + L-leucine + ATP = L-leucyl-tRNA(Leu) + AMP + diphosphate. This Citrifermentans bemidjiense (strain ATCC BAA-1014 / DSM 16622 / JCM 12645 / Bem) (Geobacter bemidjiensis) protein is Leucine--tRNA ligase.